Reading from the N-terminus, the 145-residue chain is Transcriptional anti-antiactivator ExsC (145 aa).

As to quaternary structure, homodimer. Interacts with ExsE. Interacts directly with ExsD to form a heterotetrameric complex.

The protein localises to the cytoplasm. Its activity is regulated as follows. In the absence of inducing signals, ExsE interacts with and inhibits ExsC activity. In terms of biological role, part of the regulatory cascade that plays a role in the transcriptional regulation of the type III secretion system (T3SS). Interacts with antiactivator ExsD to inhibit its activity leading to ExsA-mediated transcription. The sequence is that of Transcriptional anti-antiactivator ExsC (exsC) from Pseudomonas aeruginosa (strain ATCC 15692 / DSM 22644 / CIP 104116 / JCM 14847 / LMG 12228 / 1C / PRS 101 / PAO1).